The sequence spans 39 residues: MERNQNPNRQPVELNRTSLYLGLLLIAVLGILFSSYFFN.

The chain crosses the membrane as a helical span at residues 18–38 (SLYLGLLLIAVLGILFSSYFF).

Belongs to the PsbL family. As to quaternary structure, PSII is composed of 1 copy each of membrane proteins PsbA, PsbB, PsbC, PsbD, PsbE, PsbF, PsbH, PsbI, PsbJ, PsbK, PsbL, PsbM, PsbT, PsbX, PsbY, PsbZ, Psb30/Ycf12, peripheral proteins PsbO, CyanoQ (PsbQ), PsbU, PsbV and a large number of cofactors. It forms dimeric complexes.

It is found in the cellular thylakoid membrane. In terms of biological role, one of the components of the core complex of photosystem II (PSII). PSII is a light-driven water:plastoquinone oxidoreductase that uses light energy to abstract electrons from H(2)O, generating O(2) and a proton gradient subsequently used for ATP formation. It consists of a core antenna complex that captures photons, and an electron transfer chain that converts photonic excitation into a charge separation. This subunit is found at the monomer-monomer interface and is required for correct PSII assembly and/or dimerization. This Picosynechococcus sp. (strain ATCC 27264 / PCC 7002 / PR-6) (Agmenellum quadruplicatum) protein is Photosystem II reaction center protein L.